The following is a 288-amino-acid chain: Pyruvate synthase subunit PorB (288 aa).

[4Fe-4S] cluster-binding residues include Cys-16, Cys-19, and Cys-44. Polar residues predominate over residues 137–148 (STPYGASTTTSP). The segment at 137-159 (STPYGASTTTSPHGKESFGEDRP) is disordered. The span at 149 to 159 (HGKESFGEDRP) shows a compositional bias: basic and acidic residues. Cys-208 is a [4Fe-4S] cluster binding site.

In terms of assembly, heterotetramer of one alpha, one beta, one delta and one gamma chain. Requires [4Fe-4S] cluster as cofactor.

The catalysed reaction is 2 oxidized [2Fe-2S]-[ferredoxin] + pyruvate + CoA = 2 reduced [2Fe-2S]-[ferredoxin] + acetyl-CoA + CO2 + H(+). The chain is Pyruvate synthase subunit PorB (porB) from Methanothermobacter marburgensis (strain ATCC BAA-927 / DSM 2133 / JCM 14651 / NBRC 100331 / OCM 82 / Marburg) (Methanobacterium thermoautotrophicum).